The chain runs to 86 residues: Small nuclear ribonucleoprotein F (86 aa).

Residue Ser2 is modified to N-acetylserine. Residues 6–78 (NPKPFLNGLT…VLYIRGVEEE (73 aa)) form the Sm domain.

Belongs to the snRNP Sm proteins family. SmF/LSm6 subfamily. As to quaternary structure, core component of the spliceosomal U1, U2, U4 and U5 small nuclear ribonucleoproteins (snRNPs), the building blocks of the spliceosome. Most spliceosomal snRNPs contain a common set of Sm proteins, SNRPB, SNRPD1, SNRPD2, SNRPD3, SNRPE, SNRPF and SNRPG that assemble in a heptameric protein ring on the Sm site of the small nuclear RNA to form the core snRNP. Component of the U1 snRNP. The U1 snRNP is composed of the U1 snRNA and the 7 core Sm proteins SNRPB, SNRPD1, SNRPD2, SNRPD3, SNRPE, SNRPF and SNRPG, and at least three U1 snRNP-specific proteins SNRNP70/U1-70K, SNRPA/U1-A and SNRPC/U1-C. Component of the U4/U6-U5 tri-snRNP complex composed of the U4, U6 and U5 snRNAs and at least PRPF3, PRPF4, PRPF6, PRPF8, PRPF31, SNRNP200, TXNL4A, SNRNP40, SNRPB, SNRPD1, SNRPD2, SNRPD3, SNRPE, SNRPF, SNRPG, DDX23, CD2BP2, PPIH, SNU13, EFTUD2, SART1 and USP39, plus LSM2, LSM3, LSM4, LSM5, LSM6, LSM7 and LSM8. Component of the U7 snRNP complex, or U7 Sm protein core complex, that is composed of the U7 snRNA and at least LSM10, LSM11, SNRPB, SNRPD3, SNRPE, SNRPF and SNRPG; the complex does not contain SNRPD1 and SNRPD2. Component of the minor spliceosome, which splices U12-type introns. Part of the SMN-Sm complex that contains SMN1, GEMIN2/SIP1, DDX20/GEMIN3, GEMIN4, GEMIN5, GEMIN6, GEMIN7, GEMIN8, STRAP/UNRIP and the Sm proteins SNRPB, SNRPD1, SNRPD2, SNRPD3, SNRPE, SNRPF and SNRPG; catalyzes core snRNPs assembly. Forms a 6S pICln-Sm complex composed of CLNS1A/pICln, SNRPD1, SNRPD2, SNRPE, SNRPF and SNRPG; ring-like structure where CLNS1A/pICln mimics additional Sm proteins and which is unable to assemble into the core snRNP. Interacts with GEMIN2 (via N-terminus); the interaction is direct. Interacts with SNRPD2; the interaction is direct. Interacts with SNRPE; the interaction is direct.

Its subcellular location is the cytoplasm. The protein localises to the cytosol. It is found in the nucleus. Functionally, plays a role in pre-mRNA splicing as a core component of the spliceosomal U1, U2, U4 and U5 small nuclear ribonucleoproteins (snRNPs), the building blocks of the spliceosome. Component of both the pre-catalytic spliceosome B complex and activated spliceosome C complexes. As a component of the minor spliceosome, involved in the splicing of U12-type introns in pre-mRNAs. As part of the U7 snRNP it is involved in histone 3'-end processing. This is Small nuclear ribonucleoprotein F (SNRPF) from Homo sapiens (Human).